Reading from the N-terminus, the 638-residue chain is Probable potassium transport system protein Kup (638 aa).

The disordered stretch occupies residues 1 to 20 (MQVEHEVATEGGQAPASSGH). The next 12 helical transmembrane spans lie at 24-44 (IAGLAVAAIGVVYGDIGTSPL), 67-87 (ILSLVFWALVTVVSAKYVVFI), 115-135 (AWWLSVLGVFGAALFYGDGMI), 153-173 (PAFKPFVIPIALVVLVGLFVM), 181-201 (VGAIFGPVMVCWFLVLAVLGI), 228-248 (LIGWLALGAVVLAITGGEALY), 263-283 (WFSLVFPALYLNYLGQGALIL), 301-321 (LVYPMVGMATLATIIASQAVI), 353-373 (IYVPGVNWMLLGAVVALVVGF), 382-402 (AYGIAVTLTMMIDTVLAFVVV), 413-433 (AVLFLVVFLAVDIAFFSATTV), and 435-455 (IFAGGWFPLLIGAAIFTLLRT).

Belongs to the HAK/KUP transporter (TC 2.A.72) family.

Its subcellular location is the cell inner membrane. It catalyses the reaction K(+)(in) + H(+)(in) = K(+)(out) + H(+)(out). Transport of potassium into the cell. Likely operates as a K(+):H(+) symporter. The chain is Probable potassium transport system protein Kup from Azoarcus sp. (strain BH72).